We begin with the raw amino-acid sequence, 258 residues long: Regulatory protein RecX (258 aa).

It belongs to the RecX family.

The protein localises to the cytoplasm. In terms of biological role, modulates RecA activity. The chain is Regulatory protein RecX from Streptococcus uberis (strain ATCC BAA-854 / 0140J).